A 401-amino-acid polypeptide reads, in one-letter code: Succinyl-diaminopimelate desuccinylase (401 aa).

Zn(2+) is bound at residue His71. Asp73 is an active-site residue. Residue Asp104 participates in Zn(2+) binding. Glu138 functions as the Proton acceptor in the catalytic mechanism. 3 residues coordinate Zn(2+): Glu139, Glu167, and His352.

The protein belongs to the peptidase M20A family. DapE subfamily. As to quaternary structure, homodimer. The cofactor is Zn(2+). It depends on Co(2+) as a cofactor.

The enzyme catalyses N-succinyl-(2S,6S)-2,6-diaminopimelate + H2O = (2S,6S)-2,6-diaminopimelate + succinate. It functions in the pathway amino-acid biosynthesis; L-lysine biosynthesis via DAP pathway; LL-2,6-diaminopimelate from (S)-tetrahydrodipicolinate (succinylase route): step 3/3. In terms of biological role, catalyzes the hydrolysis of N-succinyl-L,L-diaminopimelic acid (SDAP), forming succinate and LL-2,6-diaminopimelate (DAP), an intermediate involved in the bacterial biosynthesis of lysine and meso-diaminopimelic acid, an essential component of bacterial cell walls. The sequence is that of Succinyl-diaminopimelate desuccinylase from Wolbachia sp. subsp. Brugia malayi (strain TRS).